The sequence spans 175 residues: Transcription factor E (175 aa).

In terms of domain architecture, HTH TFE/IIEalpha-type spans 3-88 (ENPLIQQVLF…TWKPSLEKVP (86 aa)).

The protein belongs to the TFE family. Monomer. Interaction with RNA polymerase subunits RpoF and RpoE is necessary for Tfe stimulatory transcription activity. Able to interact with Tbp and RNA polymerase in the absence of DNA promoter. Interacts both with the preinitiation and elongation complexes.

Transcription factor that plays a role in the activation of archaeal genes transcribed by RNA polymerase. Facilitates transcription initiation by enhancing TATA-box recognition by TATA-box-binding protein (Tbp), and transcription factor B (Tfb) and RNA polymerase recruitment. Not absolutely required for transcription in vitro, but particularly important in cases where Tbp or Tfb function is not optimal. It dynamically alters the nucleic acid-binding properties of RNA polymerases by stabilizing the initiation complex and destabilizing elongation complexes. Seems to translocate with the RNA polymerase following initiation and acts by binding to the non template strand of the transcription bubble in elongation complexes. In Methanococcus maripaludis (strain C7 / ATCC BAA-1331), this protein is Transcription factor E.